Reading from the N-terminus, the 306-residue chain is tRNA pseudouridine synthase B (306 aa).

The active-site Nucleophile is the aspartate 38.

This sequence belongs to the pseudouridine synthase TruB family. Type 1 subfamily.

The catalysed reaction is uridine(55) in tRNA = pseudouridine(55) in tRNA. Responsible for synthesis of pseudouridine from uracil-55 in the psi GC loop of transfer RNAs. The polypeptide is tRNA pseudouridine synthase B (Syntrophotalea carbinolica (strain DSM 2380 / NBRC 103641 / GraBd1) (Pelobacter carbinolicus)).